A 440-amino-acid polypeptide reads, in one-letter code: Glucose-1-phosphate adenylyltransferase (440 aa).

Residues Tyr125, Gly190, 205-206, and Ser223 each bind alpha-D-glucose 1-phosphate; that span reads EK.

It belongs to the bacterial/plant glucose-1-phosphate adenylyltransferase family. In terms of assembly, homotetramer.

It catalyses the reaction alpha-D-glucose 1-phosphate + ATP + H(+) = ADP-alpha-D-glucose + diphosphate. The protein operates within glycan biosynthesis; glycogen biosynthesis. In terms of biological role, involved in the biosynthesis of ADP-glucose, a building block required for the elongation reactions to produce glycogen. Catalyzes the reaction between ATP and alpha-D-glucose 1-phosphate (G1P) to produce pyrophosphate and ADP-Glc. This Dechloromonas aromatica (strain RCB) protein is Glucose-1-phosphate adenylyltransferase.